A 373-amino-acid polypeptide reads, in one-letter code: Dual-specificity RNA methyltransferase RlmN (373 aa).

The active-site Proton acceptor is Glu-94. The 240-residue stretch at Glu-100–Asp-339 folds into the Radical SAM core domain. Cysteines 107 and 344 form a disulfide. 3 residues coordinate [4Fe-4S] cluster: Cys-114, Cys-118, and Cys-121. Residues Gly-168–Glu-169, Ser-200, Ser-222–His-224, and Asn-301 contribute to the S-adenosyl-L-methionine site. Catalysis depends on Cys-344, which acts as the S-methylcysteine intermediate.

This sequence belongs to the radical SAM superfamily. RlmN family. It depends on [4Fe-4S] cluster as a cofactor.

Its subcellular location is the cytoplasm. The catalysed reaction is adenosine(2503) in 23S rRNA + 2 reduced [2Fe-2S]-[ferredoxin] + 2 S-adenosyl-L-methionine = 2-methyladenosine(2503) in 23S rRNA + 5'-deoxyadenosine + L-methionine + 2 oxidized [2Fe-2S]-[ferredoxin] + S-adenosyl-L-homocysteine. The enzyme catalyses adenosine(37) in tRNA + 2 reduced [2Fe-2S]-[ferredoxin] + 2 S-adenosyl-L-methionine = 2-methyladenosine(37) in tRNA + 5'-deoxyadenosine + L-methionine + 2 oxidized [2Fe-2S]-[ferredoxin] + S-adenosyl-L-homocysteine. In terms of biological role, specifically methylates position 2 of adenine 2503 in 23S rRNA and position 2 of adenine 37 in tRNAs. m2A2503 modification seems to play a crucial role in the proofreading step occurring at the peptidyl transferase center and thus would serve to optimize ribosomal fidelity. This is Dual-specificity RNA methyltransferase RlmN from Shewanella baltica (strain OS185).